We begin with the raw amino-acid sequence, 428 residues long: Dihydroorotase (428 aa).

The Zn(2+) site is built by His-59 and His-61. Residues 61–63 (HLR) and Asn-93 contribute to the substrate site. Residues Asp-151, His-178, and His-231 each coordinate Zn(2+). Asn-277 contributes to the substrate binding site. Zn(2+) is bound at residue Asp-304. Asp-304 is a catalytic residue. Residues His-308 and 322 to 323 (FG) each bind substrate.

Belongs to the metallo-dependent hydrolases superfamily. DHOase family. Class I DHOase subfamily. The cofactor is Zn(2+).

It catalyses the reaction (S)-dihydroorotate + H2O = N-carbamoyl-L-aspartate + H(+). It participates in pyrimidine metabolism; UMP biosynthesis via de novo pathway; (S)-dihydroorotate from bicarbonate: step 3/3. In terms of biological role, catalyzes the reversible cyclization of carbamoyl aspartate to dihydroorotate. This chain is Dihydroorotase, found in Bacillus cereus (strain AH187).